An 842-amino-acid polypeptide reads, in one-letter code: Outer membrane usher protein LpfC (842 aa).

An N-terminal signal peptide occupies residues 1 to 21; sequence MTWTHLPLGNKTSRFTQSALA. Residues Cys-819 and Cys-841 are joined by a disulfide bond.

Belongs to the fimbrial export usher family.

The protein localises to the cell outer membrane. Involved in the export and assembly of LpfA fimbrial subunits across the outer membrane. The polypeptide is Outer membrane usher protein LpfC (lpfC) (Salmonella typhimurium (strain LT2 / SGSC1412 / ATCC 700720)).